The sequence spans 247 residues: Probable transcriptional regulatory protein HRM2_04000 (247 aa).

It belongs to the TACO1 family.

Its subcellular location is the cytoplasm. This is Probable transcriptional regulatory protein HRM2_04000 from Desulforapulum autotrophicum (strain ATCC 43914 / DSM 3382 / VKM B-1955 / HRM2) (Desulfobacterium autotrophicum).